The following is a 334-amino-acid chain: Ornithine carbamoyltransferase (334 aa).

Residues 57 to 60, Gln84, Arg108, and 135 to 138 each bind carbamoyl phosphate; these read STRT and HPTQ. Residues Asn169, Asp233, and 237–238 each bind L-ornithine; that span reads SM. Carbamoyl phosphate-binding positions include 275 to 276 and Arg320; that span reads CL.

It belongs to the aspartate/ornithine carbamoyltransferase superfamily. OTCase family. Homotrimer.

Its subcellular location is the cytoplasm. The catalysed reaction is carbamoyl phosphate + L-ornithine = L-citrulline + phosphate + H(+). Its pathway is amino-acid biosynthesis; L-arginine biosynthesis; L-arginine from L-ornithine and carbamoyl phosphate: step 1/3. In terms of biological role, reversibly catalyzes the transfer of the carbamoyl group from carbamoyl phosphate (CP) to the N(epsilon) atom of ornithine (ORN) to produce L-citrulline. The sequence is that of Ornithine carbamoyltransferase from Vibrio vulnificus (strain CMCP6).